Reading from the N-terminus, the 421-residue chain is D-amino acid dehydrogenase (421 aa).

An FAD-binding site is contributed by 3–17 (VTILGAGVIGVTSAY).

Belongs to the DadA oxidoreductase family. Requires FAD as cofactor.

The enzyme catalyses a D-alpha-amino acid + A + H2O = a 2-oxocarboxylate + AH2 + NH4(+). It participates in amino-acid degradation; D-alanine degradation; NH(3) and pyruvate from D-alanine: step 1/1. In terms of biological role, oxidative deamination of D-amino acids. This is D-amino acid dehydrogenase from Allorhizobium ampelinum (strain ATCC BAA-846 / DSM 112012 / S4) (Agrobacterium vitis (strain S4)).